The following is a 418-amino-acid chain: Ankyrin repeat domain-containing protein 61 (418 aa).

ANK repeat units lie at residues 27–57, 75–104, 132–161, 167–196, 200–229, 234–273, 277–306, and 310–343; these read ALHSKLYEAIMREDCTTIEVLLRNHPVNQPI, ESIIPIHLAAKYHKAQSLLCLLRHGADPEV, NRTHRILTDIQNSSITCLRILCAHGAQVNT, NKRSPLHLAIAYGCYPVLSILTQNGADVNA, ASMTPLHMAANMLNKEMMETLIAYGANVNC, TGNTPLKLAVCTASSKAGRLLGAGVSCIRLLLTHGAKVNA, KGQTAIHEACFGGREAIINLLLEFEANVNI, and NGESPIYMYLQRSCNVRDTALLARLLYHTYPLRM.

This is Ankyrin repeat domain-containing protein 61 (ANKRD61) from Homo sapiens (Human).